The chain runs to 178 residues: Ribosome rescue factor SmrB (178 aa).

The Smr domain occupies 99–174 (LDLHGLTQMQ…GNAALLILIE (76 aa)).

Belongs to the SmrB family. Associates with collided ribosomes, but not with correctly translating polysomes.

In terms of biological role, acts as a ribosome collision sensor. Detects stalled/collided disomes (pairs of ribosomes where the leading ribosome is stalled and a second ribosome has collided with it) and endonucleolytically cleaves mRNA at the 5' boundary of the stalled ribosome. Stalled/collided disomes form a new interface (primarily via the 30S subunits) that binds SmrB. Cleaved mRNA becomes available for tmRNA ligation, leading to ribosomal subunit dissociation and rescue of stalled ribosomes. The sequence is that of Ribosome rescue factor SmrB from Photorhabdus laumondii subsp. laumondii (strain DSM 15139 / CIP 105565 / TT01) (Photorhabdus luminescens subsp. laumondii).